A 709-amino-acid polypeptide reads, in one-letter code: SH3 domain-containing kinase-binding protein 1 (709 aa).

SH3 domains are found at residues 1–58 (MVEA…EIKK) and 98–157 (RRRR…ELSG). A phosphoserine mark is found at Ser156, Ser159, Ser227, and Ser274. The span at 221–239 (ETTGSESDGGDSSSTKSEG) shows a compositional bias: low complexity. The interval 221–242 (ETTGSESDGGDSSSTKSEGANG) is disordered. 3 disordered regions span residues 289 to 309 (GKKLPPATSTPDPSKTEMDSR), 372 to 485 (SDFD…KIDL), and 511 to 650 (DSVI…VSSQ). Thr298 carries the post-translational modification Phosphothreonine. One can recognise an SH3 3 domain in the interval 311–372 (KTKDYCKVIF…PDNFVKLLPS (62 aa)). The span at 399–434 (TERKHEIKKIPPERPETLPNRTEEKERPEREPKLDL) shows a compositional bias: basic and acidic residues. Ser480 is subject to Phosphoserine. Over residues 513–528 (VISSTEKLSHPTTSRP) the composition is skewed to polar residues. The span at 535-554 (PPSQSLTSSSLSSPDIFDSP) shows a compositional bias: low complexity. 3 positions are modified to phosphoserine: Ser553, Ser555, and Ser565. The segment covering 561 to 575 (EEHISLAHRGIDVSK) has biased composition (basic and acidic residues). A compositionally biased stretch (polar residues) spans 579–592 (KTVTISQVSDNKTS). Positions 600 to 623 (MAAASSGPASLSSVASSPMSSSLG) are enriched in low complexity. The segment covering 627–636 (QRASSPSLFS) has biased composition (polar residues). Phosphoserine is present on Ser631. Positions 646–708 (AVSSQAAIEE…VNDIKKALQS (63 aa)) form a coiled coil.

As to quaternary structure, can self-associate and form homotetramers. Interacts with CD2, F-actin capping protein, PIK3R3, GRB2, EGFR, MET, BLNK, MAP3K4, PDCD6IP, SPRY2, ARHGAP17, ARHGAP27, CRK, BCAR1, SOS1, ASAP1, ARAP3, HIP1R, SYNJ2, INPP5D and STAP1. Interacts with E3 ubiquitin-protein ligase CBL. Interacts with CBLB, but does not interact with CBLC. Two molecules of SH3KBP1 seem to bind through their respective SH3 1 domain to one molecule of CBLB. The interaction with CBL or CBLB and EGFR is increased upon EGF stimulation. The interaction with CBL is attenuated by PDCD6IP. Interacts (via SH3 domains) with ARAP1. The interaction is independent of EGF and does not affect ARAP1 GTPase-activating activity but is involved in regulating ubiquitination and endocytic trafficking of EGFR. ARAP1 competes with CBL for binding to SH3KBP1 and prevents interaction of CBL with SH3KBP1; this is likely to regulate SH3KBP1-mediated internalization of EGFR. Interacts through its proline-rich region with the SH3 domain of endophilins SH3GL1, SH3GL2 and SH3GL3. The SH3KBP1-endophilin complex seems to associate with a complex containing the phosphorylated receptor (EGFR or MET) and phosphorylated CBL. Probably associates with ASAP1 and phosphorylated EGFR. Probably part of a complex consisting of at least SH3KBP1, ASAP1 and ARAP3. Interacts with focal adhesion kinases PTK2/FAK1 and PTK2B/PYK2, probably as a dimer. Interacts with DAB2 and probably associates with chathrin through its interaction with DAB2. Part of a complex consisting of SH3KBP1, DAB2, and clathrin heavy chain. DAB2 and clathrin dissociate from SH3KBP1 following growth factor treatment, enabling interaction with CBL. Interacts with DDN and probably associates with MAGI2 through its interaction with DDN. Interacts with the SH3 domains of SRC tyrosine-protein kinases SRC, LCK, LYN, FGR, FYN and HCK. Interacts with TRADD, BIRC2, TRAF1, TRAF2 and TNFR1, and the association with a TNFR1-associated complex upon stimulation with TNF-alpha seems to be mediated by SRC. Probably part of a complex consisting of at least SH3KBP1, ASAP1 and ARAP3. Interacts (via SH3 domains) with SHKBP1 (via PXXXPR motifs). Interacts with ATX2. Interaction with CBL is abolished in the presence of SHKBP1. Interacts (via SH3 domains) with ZFP36 (via extreme C-terminal region). Interacts with MAP3K4; this interaction enhances the association with ZFP36. Post-translationally, monoubiquitinated by CBL and CBLB after EGF stimulation; probably on its C-terminus.

The protein resides in the cytoplasm. The protein localises to the cytoskeleton. It is found in the cytoplasmic vesicle membrane. Its subcellular location is the synapse. It localises to the synaptosome. The protein resides in the cell junction. The protein localises to the focal adhesion. In terms of biological role, adapter protein involved in regulating diverse signal transduction pathways. Involved in the regulation of endocytosis and lysosomal degradation of ligand-induced receptor tyrosine kinases, including EGFR and MET/hepatocyte growth factor receptor, through an association with CBL and endophilins. The association with CBL, and thus the receptor internalization, may be inhibited by an interaction with PDCD6IP and/or SPRY2. Involved in regulation of ligand-dependent endocytosis of the IgE receptor. Attenuates phosphatidylinositol 3-kinase activity by interaction with its regulatory subunit. May be involved in regulation of cell adhesion; promotes the interaction between TTK2B and PDCD6IP. May be involved in the regulation of cellular stress response via the MAPK pathways through its interaction with MAP3K4. Is involved in modulation of tumor necrosis factor mediated apoptosis. Plays a role in the regulation of cell morphology and cytoskeletal organization. Required in the control of cell shape and migration. Has an essential role in the stimulation of B cell activation. The sequence is that of SH3 domain-containing kinase-binding protein 1 (Sh3kbp1) from Mus musculus (Mouse).